Here is a 73-residue protein sequence, read N- to C-terminus: Conotoxin im23b (73 aa).

Residues 1–22 (MIMRMTLTLFVLVVMTAASASG) form the signal peptide. The propeptide occupies 23–28 (DALTEA). Disulfide bonds link Cys34/Cys41, Cys45/Cys55, and Cys56/Cys71.

It belongs to the conotoxin K superfamily. Expressed by the venom duct.

The protein resides in the secreted. In terms of biological role, neurotoxin that induces excitatory symptoms in mice following intracranial administration. No symptoms are observed after intraperitoneal and intravenous (tail vein) injections. The protein is Conotoxin im23b of Conus imperialis (Imperial cone).